The primary structure comprises 117 residues: Small ribosomal subunit protein bS6 (117 aa).

A disordered region spans residues 96–117; it reads HDEGPSVQMQKRDEREGRRERR.

The protein belongs to the bacterial ribosomal protein bS6 family.

Binds together with bS18 to 16S ribosomal RNA. The protein is Small ribosomal subunit protein bS6 of Jannaschia sp. (strain CCS1).